We begin with the raw amino-acid sequence, 214 residues long: MSAVTQHHADELARGADELGVALDADKQRQLLAYLALLIKWNKAYNLTAVRDPDEMVSRHLLDSLSIVPYAEAGDNWLDVGSGGGMPGVPLAILFPEKRLTLLDSNGKKTRFLTQVKLELKLANLEVVHSRVEAFRPESPFDGIVSRAFSSLEDFANWTRHLGGQETRWLAMKGVHPNEELAALPEDFRVEAEHALAVPGCQGQRHLLILRCTA.

S-adenosyl-L-methionine is bound by residues G81, M86, 132 to 133, and R147; that span reads VE.

This sequence belongs to the methyltransferase superfamily. RNA methyltransferase RsmG family.

It is found in the cytoplasm. The enzyme catalyses guanosine(527) in 16S rRNA + S-adenosyl-L-methionine = N(7)-methylguanosine(527) in 16S rRNA + S-adenosyl-L-homocysteine. Its function is as follows. Specifically methylates the N7 position of guanine in position 527 of 16S rRNA. This Pseudomonas aeruginosa (strain UCBPP-PA14) protein is Ribosomal RNA small subunit methyltransferase G.